We begin with the raw amino-acid sequence, 405 residues long: Mevalonate 3,5-bisphosphate decarboxylase (405 aa).

Belongs to the mevalonate 3,5-bisphosphate decarboxylase family. In terms of assembly, homodimer.

It catalyses the reaction (R)-3,5-bisphosphomevalonate + H(+) = isopentenyl phosphate + phosphate + CO2. It functions in the pathway isoprenoid biosynthesis; isopentenyl diphosphate biosynthesis via mevalonate pathway. Its function is as follows. Catalyzes the ATP-independent decarboxylation of (R)-mevalonate 3,5-bisphosphate to isopentenyl phosphate. Functions in an alternative mevalonate pathway, only present in extreme acidophiles of the Thermoplasmatales order, which passes through mevalonate 3-phosphate rather than mevalonate 5-phosphate. In Thermoplasma acidophilum (strain ATCC 25905 / DSM 1728 / JCM 9062 / NBRC 15155 / AMRC-C165), this protein is Mevalonate 3,5-bisphosphate decarboxylase.